Consider the following 264-residue polypeptide: tRNA (guanine-N(1)-)-methyltransferase (264 aa).

Residues Gly113 and 133-138 contribute to the S-adenosyl-L-methionine site; that span reads IGDYVL. The segment at 244-264 is disordered; it reads VQQAATPGGQRRPPWHRDSRA.

It belongs to the RNA methyltransferase TrmD family. As to quaternary structure, homodimer.

It is found in the cytoplasm. The enzyme catalyses guanosine(37) in tRNA + S-adenosyl-L-methionine = N(1)-methylguanosine(37) in tRNA + S-adenosyl-L-homocysteine + H(+). In terms of biological role, specifically methylates guanosine-37 in various tRNAs. The polypeptide is tRNA (guanine-N(1)-)-methyltransferase (Frankia alni (strain DSM 45986 / CECT 9034 / ACN14a)).